The following is a 211-amino-acid chain: Redox-sensing transcriptional repressor Rex (211 aa).

A DNA-binding region (H-T-H motif) is located at residues 17–56 (LYYRLVSILKGKGIDRVNSKTISEALQIDSATIRRDFSYF). 91–96 (GIGNLG) contributes to the NAD(+) binding site.

The protein belongs to the transcriptional regulatory Rex family. In terms of assembly, homodimer.

It is found in the cytoplasm. Functionally, modulates transcription in response to changes in cellular NADH/NAD(+) redox state. The sequence is that of Redox-sensing transcriptional repressor Rex from Staphylococcus epidermidis (strain ATCC 12228 / FDA PCI 1200).